The following is a 217-amino-acid chain: Pyrophosphatase PpaX (217 aa).

Catalysis depends on D11, which acts as the Nucleophile.

It belongs to the HAD-like hydrolase superfamily. PpaX family. Mg(2+) serves as cofactor.

The catalysed reaction is diphosphate + H2O = 2 phosphate + H(+). Its function is as follows. Hydrolyzes pyrophosphate formed during P-Ser-HPr dephosphorylation by HPrK/P. Might play a role in controlling the intracellular pyrophosphate pool. The chain is Pyrophosphatase PpaX from Listeria innocua serovar 6a (strain ATCC BAA-680 / CLIP 11262).